The sequence spans 148 residues: Large ribosomal subunit protein uL15 (148 aa).

Positions 1–30 (MPSRLRKTRKLRGHVSHGHGRIGKHRKHPG) are enriched in basic residues. The interval 1 to 38 (MPSRLRKTRKLRGHVSHGHGRIGKHRKHPGGRGNAGGL) is disordered. The residue at position 39 (histidine 39) is a (3S)-3-hydroxyhistidine. Residues lysine 47 and lysine 55 each carry the N6-acetyllysine modification. Serine 68 carries the phosphoserine modification. Lysine 110 bears the N6-acetyllysine mark.

It belongs to the universal ribosomal protein uL15 family. In terms of assembly, component of the large ribosomal subunit. Hydroxylated on His-39 by MINA.

The protein resides in the cytoplasm. Functionally, component of the large ribosomal subunit. The ribosome is a large ribonucleoprotein complex responsible for the synthesis of proteins in the cell. The chain is Large ribosomal subunit protein uL15 (RPL27A) from Homo sapiens (Human).